Consider the following 117-residue polypeptide: Large ribosomal subunit protein eL34 (117 aa).

Position 12 is a phosphoserine (Ser-12). 2 positions are modified to N6-acetyllysine: Lys-36 and Lys-43. Residue Lys-108 forms a Glycyl lysine isopeptide (Lys-Gly) (interchain with G-Cter in SUMO2) linkage.

The protein belongs to the eukaryotic ribosomal protein eL34 family. In terms of assembly, component of the large ribosomal subunit.

The protein localises to the cytoplasm. Its subcellular location is the cytosol. It localises to the endoplasmic reticulum. Functionally, component of the large ribosomal subunit. The ribosome is a large ribonucleoprotein complex responsible for the synthesis of proteins in the cell. The protein is Large ribosomal subunit protein eL34 (RPL34) of Sus scrofa (Pig).